We begin with the raw amino-acid sequence, 316 residues long: Beta-ketoacyl-[acyl-carrier-protein] synthase III (316 aa).

Residues C112 and H243 contribute to the active site. The segment at Q244–R248 is ACP-binding. The active site involves N273.

Belongs to the thiolase-like superfamily. FabH family. As to quaternary structure, homodimer.

It localises to the cytoplasm. The enzyme catalyses malonyl-[ACP] + acetyl-CoA + H(+) = 3-oxobutanoyl-[ACP] + CO2 + CoA. It participates in lipid metabolism; fatty acid biosynthesis. Its function is as follows. Catalyzes the condensation reaction of fatty acid synthesis by the addition to an acyl acceptor of two carbons from malonyl-ACP. Catalyzes the first condensation reaction which initiates fatty acid synthesis and may therefore play a role in governing the total rate of fatty acid production. Possesses both acetoacetyl-ACP synthase and acetyl transacylase activities. Its substrate specificity determines the biosynthesis of branched-chain and/or straight-chain of fatty acids. This Histophilus somni (strain 2336) (Haemophilus somnus) protein is Beta-ketoacyl-[acyl-carrier-protein] synthase III.